We begin with the raw amino-acid sequence, 305 residues long: Homoserine O-acetyltransferase (305 aa).

The active-site Acyl-thioester intermediate is Cys142. Substrate contacts are provided by Lys163 and Ser192. The Proton acceptor role is filled by His235. Glu237 is an active-site residue. A substrate-binding site is contributed by Arg249.

This sequence belongs to the MetA family.

Its subcellular location is the cytoplasm. The enzyme catalyses L-homoserine + acetyl-CoA = O-acetyl-L-homoserine + CoA. Its pathway is amino-acid biosynthesis; L-methionine biosynthesis via de novo pathway; O-acetyl-L-homoserine from L-homoserine: step 1/1. Its function is as follows. Transfers an acetyl group from acetyl-CoA to L-homoserine, forming acetyl-L-homoserine. The protein is Homoserine O-acetyltransferase of Bacteroides fragilis (strain YCH46).